The chain runs to 424 residues: Protein UL117 (424 aa).

Positions 57-82 (IVPTTSSSLAPPRDDERRPTPPLRPP) are disordered.

The protein belongs to the herpesviridae U84 family.

The protein localises to the host nucleus. Functionally, plays a role in the inhibition of host DNA replication in the infected cell. Targets the mini-chromosome maintenance (MCM) complex and blocks the accumulation of MCM proteins and their loading onto host chromatin. This chain is Protein UL117 (UL117), found in Human cytomegalovirus (strain AD169) (HHV-5).